Consider the following 300-residue polypeptide: F-box/LRR-repeat protein 15 (300 aa).

An N-acetylmethionine modification is found at M1. An F-box domain is found at 19-66 (LLDLPWEDVLLPHILSRVPLRQLLRLQRVSRAFRALVQLHLAGLRRFD). The interaction with SMURF1 stretch occupies residues 113–269 (NPQLRSVALA…EPSLSRLRKR (157 aa)). 5 LRR repeats span residues 141–162 (RLQRLSLAHCDWVDGLALRGLA), 167–188 (ALEELDLTACRQLKDEAIVYLA), 194–215 (GLRSLSLAVNANVGDAAVQELA), 220–241 (ELEHLDLTGCLRVGSDGVRTLA), and 246–267 (ALRSLRVRHCHHVAEPSLSRLR).

This sequence belongs to the FBXL15 family. In terms of assembly, part of the SCF (SKP1-CUL1-F-box) E3 ubiquitin-protein ligase complex SCF(FBXL15) composed of CUL1, SKP1, RBX1 and FBXL15.

It is found in the cytoplasm. Its pathway is protein modification; protein ubiquitination. Functionally, substrate recognition component of a SCF (SKP1-CUL1-F-box protein) E3 ubiquitin-protein ligase complex which mediates the ubiquitination and subsequent proteasomal degradation of SMURF1, thereby acting as a positive regulator of the BMP signaling pathway. Required for dorsal/ventral pattern formation and bone mass maintenance. Also mediates ubiquitination of SMURF2 and WWP2. The protein is F-box/LRR-repeat protein 15 (FBXL15) of Canis lupus familiaris (Dog).